We begin with the raw amino-acid sequence, 154 residues long: Hexachlorocyclohexane dehydrochlorinase 1 (154 aa).

Asp25 is a catalytic residue. His73 acts as the Proton acceptor in catalysis.

It belongs to the HCH dehydrochlorinase family. As to quaternary structure, homotrimer.

Its subcellular location is the periplasm. The catalysed reaction is gamma-hexachlorocyclohexane = (3R,4S,5S,6R)-pentachlorocyclohexene + chloride + H(+). It carries out the reaction (3R,4S,5S,6R)-pentachlorocyclohexene = (3R,6R)-1,3,4,6-tetrachlorocyclohexa-1,4-diene + chloride + H(+). It participates in xenobiotic degradation; hexachlorocyclohexane degradation. Functionally, catalyzes the conversion of the important environmental pollutant gamma-hexachlorocyclohexane (gamma-HCH or lindane) to 1,3,4,6-tetrachloro-1,4-cyclohexadiene (1,4-TCDN) via gamma-pentachlorocyclohexene (gamma-PCCH). Proceeds by two successive 1,2-anti conformationally dependent dehydrochlorinations. Also shows activity with alpha- and delta-HCH, giving alpha- and delta-PCCH respectively, but not with the beta isomer. The chain is Hexachlorocyclohexane dehydrochlorinase 1 from Sphingobium indicum (strain DSM 16412 / CCM 7286 / MTCC 6364 / B90A).